Here is a 138-residue protein sequence, read N- to C-terminus: ATP synthase epsilon chain (138 aa).

This sequence belongs to the ATPase epsilon chain family. In terms of assembly, F-type ATPases have 2 components, CF(1) - the catalytic core - and CF(0) - the membrane proton channel. CF(1) has five subunits: alpha(3), beta(3), gamma(1), delta(1), epsilon(1). CF(0) has three main subunits: a, b and c.

The protein localises to the cell inner membrane. Its function is as follows. Produces ATP from ADP in the presence of a proton gradient across the membrane. The chain is ATP synthase epsilon chain from Delftia acidovorans (strain DSM 14801 / SPH-1).